A 126-amino-acid chain; its full sequence is Glycine cleavage system H protein (126 aa).

In terms of domain architecture, Lipoyl-binding spans 21–103 (TVTVGISDHA…YESGWIARIK (83 aa)). An N6-lipoyllysine modification is found at Lys-62.

It belongs to the GcvH family. As to quaternary structure, the glycine cleavage system is composed of four proteins: P, T, L and H. Requires (R)-lipoate as cofactor.

In terms of biological role, the glycine cleavage system catalyzes the degradation of glycine. The H protein shuttles the methylamine group of glycine from the P protein to the T protein. The polypeptide is Glycine cleavage system H protein (Aliivibrio fischeri (strain ATCC 700601 / ES114) (Vibrio fischeri)).